The following is a 461-amino-acid chain: ATP synthase subunit beta 2 (461 aa).

Position 151–158 (G151–T158) interacts with ATP.

Belongs to the ATPase alpha/beta chains family. As to quaternary structure, F-type ATPases have 2 components, CF(1) - the catalytic core - and CF(0) - the membrane proton channel. CF(1) has five subunits: alpha(3), beta(3), gamma(1), delta(1), epsilon(1). CF(0) has three main subunits: a(1), b(2) and c(9-12). The alpha and beta chains form an alternating ring which encloses part of the gamma chain. CF(1) is attached to CF(0) by a central stalk formed by the gamma and epsilon chains, while a peripheral stalk is formed by the delta and b chains.

The protein localises to the cell inner membrane. It catalyses the reaction ATP + H2O + 4 H(+)(in) = ADP + phosphate + 5 H(+)(out). Produces ATP from ADP in the presence of a proton gradient across the membrane. The catalytic sites are hosted primarily by the beta subunits. In Photobacterium profundum (strain SS9), this protein is ATP synthase subunit beta 2.